The sequence spans 427 residues: Glutamate-1-semialdehyde 2,1-aminomutase (427 aa).

Lys264 carries the post-translational modification N6-(pyridoxal phosphate)lysine.

The protein belongs to the class-III pyridoxal-phosphate-dependent aminotransferase family. HemL subfamily. In terms of assembly, homodimer. The cofactor is pyridoxal 5'-phosphate.

It is found in the cytoplasm. The catalysed reaction is (S)-4-amino-5-oxopentanoate = 5-aminolevulinate. It participates in porphyrin-containing compound metabolism; protoporphyrin-IX biosynthesis; 5-aminolevulinate from L-glutamyl-tRNA(Glu): step 2/2. The sequence is that of Glutamate-1-semialdehyde 2,1-aminomutase from Clostridium botulinum (strain Eklund 17B / Type B).